We begin with the raw amino-acid sequence, 165 residues long: uncharacterized protein (165 aa).

This is an uncharacterized protein from Rickettsia conorii (strain ATCC VR-613 / Malish 7).